The chain runs to 953 residues: UPF0746 protein DDB_G0281301 (953 aa).

Basic and acidic residues predominate over residues 1-10 (MVNNKRKEIE). Residues 1 to 23 (MVNNKRKEIENQENDNNDDNDGL) are disordered. The segment covering 11–21 (NQENDNNDDND) has biased composition (acidic residues). An SAP domain is found at 35–69 (YDSIRSKELQTIAKSLGLPIIGKKQEIYKRIEGYF).

This sequence belongs to the UPF0746 family.

This chain is UPF0746 protein DDB_G0281301, found in Dictyostelium discoideum (Social amoeba).